We begin with the raw amino-acid sequence, 289 residues long: BTB/POZ domain-containing protein KCTD7 (289 aa).

Polar residues predominate over residues 1-10; the sequence is MVVVTGQSKG. The interval 1 to 35 is disordered; that stretch reads MVVVTGQSKGSGDPDEAMSSSDAEDDFQEPATPTA. The BTB domain maps to 51 to 149; the sequence is EVVPLNVGGM…HLEDVQPLKG (99 aa).

The protein resides in the cell membrane. Its subcellular location is the cytoplasm. It is found in the cytosol. Functionally, may be involved in the control of excitability of cortical neurons. The sequence is that of BTB/POZ domain-containing protein KCTD7 (KCTD7) from Gallus gallus (Chicken).